Here is a 119-residue protein sequence, read N- to C-terminus: MSPRKTYILKLYVAGNTPNSMRALKTLRNILETEFKGVYALKVIDVLKNPQLAEEDKILATPTLSKILPPPVRRIIGDLSDRERVLIGLDLLYDELVDNDLNSSLMDALGVPDIEEADS.

It belongs to the KaiB family. As to quaternary structure, the KaiABC complex composition changes during the circadian cycle to control KaiC phosphorylation. Complexes KaiC(6), KaiA(2-4):KaiC(6), KaiB(6):KaiC(6) and KaiC(6):KaiB(6):KaiA(12) are among the most important forms, many form cooperatively. Undergoes a major conformational rearrangment; in the free state forms homotetramers as a dimer of dimers. When bound to the CI domain of KaiC switches to a monomeric thioredoxin-fold (KaiB(fs)). KaiB(fs) binds CikA, leading it to dephosphorylate phospho-RpaA.

Its function is as follows. Key component of the KaiABC oscillator complex, which constitutes the main circadian regulator in cyanobacteria. Complex composition changes during the circadian cycle to control KaiC phosphorylation. KaiA stimulates KaiC autophosphorylation, while KaiB sequesters KaiA, leading to KaiC autodephosphorylation. Phospho-Ser-431 KaiC accumulation triggers binding of KaiB to form the KaiB(6):KaiC(6) complex, leading to changes in output regulators CikA and SasA. KaiB switches to a thioredoxin-like fold (KaiB(fs)) when bound to KaiC. KaiB(6):KaiC(6) formation exposes a site for KaiA binding that sequesters KaiA from KaiC, making the KaiC(6):KaiB(6):KaiA(12) complex that results in KaiC autodephosphorylation. In terms of biological role, a metamorphic protein which reversibly switches between an inactive tetrameric fold and a rare, thioredoxin-like monomeric fold (KaiB(fs)). KaiB(fs) binds phospho-KaiC, KaiA and CikA. KaiA and CikA compete for binding to KaiB(fs), and KaiB(fs) and SasA compete for binding to KaiC, thus the clock oscillator and output signal pathway are tightly coupled. This Synechococcus sp. (strain CC9311) protein is Circadian clock oscillator protein KaiB.